The sequence spans 192 residues: Probable nicotinate-nucleotide adenylyltransferase (192 aa).

Belongs to the NadD family.

It carries out the reaction nicotinate beta-D-ribonucleotide + ATP + H(+) = deamido-NAD(+) + diphosphate. It participates in cofactor biosynthesis; NAD(+) biosynthesis; deamido-NAD(+) from nicotinate D-ribonucleotide: step 1/1. Functionally, catalyzes the reversible adenylation of nicotinate mononucleotide (NaMN) to nicotinic acid adenine dinucleotide (NaAD). This is Probable nicotinate-nucleotide adenylyltransferase from Cereibacter sphaeroides (strain ATCC 17029 / ATH 2.4.9) (Rhodobacter sphaeroides).